The chain runs to 178 residues: ATP-dependent protease subunit HslV (178 aa).

Threonine 7 is a catalytic residue. Na(+) is bound by residues glycine 162, cysteine 165, and threonine 168.

This sequence belongs to the peptidase T1B family. HslV subfamily. In terms of assembly, a double ring-shaped homohexamer of HslV is capped on each side by a ring-shaped HslU homohexamer. The assembly of the HslU/HslV complex is dependent on binding of ATP.

It localises to the cytoplasm. It catalyses the reaction ATP-dependent cleavage of peptide bonds with broad specificity.. Allosterically activated by HslU binding. Its function is as follows. Protease subunit of a proteasome-like degradation complex believed to be a general protein degrading machinery. The sequence is that of ATP-dependent protease subunit HslV from Burkholderia cenocepacia (strain ATCC BAA-245 / DSM 16553 / LMG 16656 / NCTC 13227 / J2315 / CF5610) (Burkholderia cepacia (strain J2315)).